An 88-amino-acid chain; its full sequence is Small ribosomal subunit protein bS20 (88 aa).

Belongs to the bacterial ribosomal protein bS20 family.

In terms of biological role, binds directly to 16S ribosomal RNA. The sequence is that of Small ribosomal subunit protein bS20 from Renibacterium salmoninarum (strain ATCC 33209 / DSM 20767 / JCM 11484 / NBRC 15589 / NCIMB 2235).